We begin with the raw amino-acid sequence, 321 residues long: ATP-dependent 6-phosphofructokinase (321 aa).

Gly-12 contributes to the ATP binding site. ADP contacts are provided by residues 22-26 (RGVVR) and 55-60 (RYSVSD). Residues 73-74 (RF) and 103-106 (GDGS) each bind ATP. Asp-104 provides a ligand contact to Mg(2+). Position 127–129 (127–129 (TID)) interacts with substrate. Asp-129 functions as the Proton acceptor in the catalytic mechanism. ADP is bound at residue Arg-156. Substrate contacts are provided by residues Arg-164 and 171–173 (MGR). Residues 187–189 (GCE), Arg-213, and 215–217 (KRH) contribute to the ADP site. Substrate is bound by residues Glu-224, Arg-245, and 251 to 254 (HIQR).

It belongs to the phosphofructokinase type A (PFKA) family. ATP-dependent PFK group I subfamily. Prokaryotic clade 'B1' sub-subfamily. Homotetramer. It depends on Mg(2+) as a cofactor.

It is found in the cytoplasm. The enzyme catalyses beta-D-fructose 6-phosphate + ATP = beta-D-fructose 1,6-bisphosphate + ADP + H(+). The protein operates within carbohydrate degradation; glycolysis; D-glyceraldehyde 3-phosphate and glycerone phosphate from D-glucose: step 3/4. Its activity is regulated as follows. Allosterically activated by ADP and other diphosphonucleosides, and allosterically inhibited by phosphoenolpyruvate. In terms of biological role, catalyzes the phosphorylation of D-fructose 6-phosphate to fructose 1,6-bisphosphate by ATP, the first committing step of glycolysis. The protein is ATP-dependent 6-phosphofructokinase of Haemophilus influenzae (strain 86-028NP).